The chain runs to 431 residues: RNA-binding motif, single-stranded-interacting protein 3 (431 aa).

Residues 28–53 are disordered; sequence YAPAPHPMAPPSPSTNSSSNSSGEQL. Residues 31 to 40 show a composition bias toward pro residues; that stretch reads APHPMAPPSP. 2 RRM domains span residues 56 to 129 and 135 to 220; these read TNLY…MAKQ and TNLY…FADG. Disordered stretches follow at residues 220–242 and 393–431; these read GGQK…PREG and TSPQ…QSKP. Positions 401-411 are enriched in low complexity; it reads SSQDSSGQQQQ.

It localises to the cytoplasm. In terms of biological role, binds poly(A) and poly(U) oligoribonucleotides. This Mus musculus (Mouse) protein is RNA-binding motif, single-stranded-interacting protein 3 (Rbms3).